A 244-amino-acid chain; its full sequence is 6-carboxyhexanoate--CoA ligase (244 aa).

It belongs to the BioW family. Homodimer. It depends on Mg(2+) as a cofactor.

The catalysed reaction is heptanedioate + ATP + CoA = 6-carboxyhexanoyl-CoA + AMP + diphosphate. The protein operates within metabolic intermediate metabolism; pimeloyl-CoA biosynthesis; pimeloyl-CoA from pimelate: step 1/1. Its function is as follows. Catalyzes the transformation of pimelate into pimeloyl-CoA with concomitant hydrolysis of ATP to AMP. This is 6-carboxyhexanoate--CoA ligase from Hydrogenobacter thermophilus (strain DSM 6534 / IAM 12695 / TK-6).